An 887-amino-acid chain; its full sequence is Fibroblast growth factor receptor 2 (887 aa).

An N-terminal signal peptide occupies residues 1-18; the sequence is MLNKFIVIVTMLAMWNYA. Topologically, residues 19-416 are extracellular; sequence QDCNFELSKN…KDCVGNSYFT (398 aa). Ig-like C2-type domains lie at 22–115 and 180–260; these read NFEL…EFIS and VSGS…LRMK. N-linked (GlcNAc...) asparagine glycans are attached at residues N28, N74, N93, N230, N261, N268, N328, N334, and N364. A disulfide bridge connects residues C43 and C104. The 91-residue stretch at 297–387 folds into the Ig-like C2-type 3 domain; the sequence is FNLNSRVCIN…YACRIINFKD (91 aa). Residues C313 and C380 are joined by a disulfide bond. A helical transmembrane segment spans residues 417–437; it reads IIWYSISVGIIILVVISFLII. At 438 to 887 the chain is on the cytoplasmic side; the sequence is RLYNKYSNGY…SNQCYSTTIV (450 aa). One can recognise a Protein kinase domain in the interval 585 to 862; that stretch reads LIIGSKIGEG…IIDKLTHIQL (278 aa). Residues 591–599 and K619 each bind ATP; that span reads IGEGAFGIV. The active-site Proton acceptor is the D728. At Y757 the chain carries Phosphotyrosine; by autocatalysis.

This sequence belongs to the protein kinase superfamily. Tyr protein kinase family. Fibroblast growth factor receptor subfamily. As to expression, expressed in brain, stem cells and the mesenchymal cells.

It localises to the membrane. The catalysed reaction is L-tyrosyl-[protein] + ATP = O-phospho-L-tyrosyl-[protein] + ADP + H(+). Functionally, receptor for basic fibroblast growth factor. In Dugesia japonica (Planarian), this protein is Fibroblast growth factor receptor 2 (FGFR2).